Here is a 484-residue protein sequence, read N- to C-terminus: Monocarboxylate transporter 2 (484 aa).

The Cytoplasmic portion of the chain corresponds to 1 to 16 (MPSEPSAPLPQPLPPD). A helical membrane pass occupies residues 17–37 (GGWGWVVVCASFISIGFSYAF). At 38-60 (PKAVTVFFKDIQEIFNTTSSQIA) the chain is on the extracellular side. Residues 61 to 81 (WISSIMLAVMYAGGPISSVLV) traverse the membrane as a helical segment. The Cytoplasmic portion of the chain corresponds to 82-90 (NNYGSRPVV). Residues 91–111 (IVGGLLCCIGMILASYSNSVI) form a helical membrane-spanning segment. Over 112–116 (ELYLT) the chain is Extracellular. A helical membrane pass occupies residues 117-137 (VGFIGGLGLAFNLQPALTIIG). The Cytoplasmic portion of the chain corresponds to 138–149 (KYFYRRRPLANG). Residues 150–170 (CAMAGSPVFLSTLAPFNQYLF) traverse the membrane as a helical segment. Residues 171–174 (NNYG) are Extracellular-facing. The helical transmembrane segment at 175–195 (WKGSFLILGGIFLHSCVAGCL) threads the bilayer. Residues 196 to 245 (MRPVGPSPNTKKSKSKVGSRHDSTLKKASKVSTAQKVNRFLDFSLFMHRG) are Cytoplasmic-facing. Residues 246–266 (FLIYLSGNVILFLGIFAPIIF) form a helical membrane-spanning segment. Topologically, residues 267 to 281 (LAQYAKHIGVDDYNS) are extracellular. A helical transmembrane segment spans residues 282–302 (AFLLSVMAFIDMFARPSVGLI). Residues 303-311 (ANTSLIRPR) lie on the Cytoplasmic side of the membrane. The chain crosses the membrane as a helical span at residues 312-332 (IQYLFSSAIIFTGICHLLCPL). At 333-337 (ATTYS) the chain is on the extracellular side. Residues 338-358 (ALVVYVVFFGLGFGSISSLLF) traverse the membrane as a helical segment. Over 359-372 (ECLMDIVGATRFSS) the chain is Cytoplasmic. The helical transmembrane segment at 373–393 (AVGLTTIVECCPVLFGPPLAG) threads the bilayer. Topologically, residues 394 to 405 (KLLDITGEYKYL) are extracellular. A helical membrane pass occupies residues 406 to 426 (YIASGTVVLVSGTYLLIGNAI). Topologically, residues 427–484 (NYRLLDKERKREKAKKKKSASHASREMEALNRSKQDEVTVKASNAHNPPSDRDKESNI) are cytoplasmic. The interval 438-484 (EKAKKKKSASHASREMEALNRSKQDEVTVKASNAHNPPSDRDKESNI) is disordered. Basic and acidic residues-rich tracts occupy residues 449 to 465 (ASRE…DEVT) and 475 to 484 (PSDRDKESNI).

The protein belongs to the major facilitator superfamily. Monocarboxylate porter (TC 2.A.1.13) family. In terms of assembly, homodimer. Interacts with GRID2IP. Interacts with EMB; interaction mediates SLC16A7 targeting to the plasma membrane. Interacts with isoform 2 of BSG. Detected in testis and in spermatozoa (at protein level).

The protein localises to the cell membrane. The protein resides in the cytoplasm. It localises to the basolateral cell membrane. It catalyses the reaction (S)-lactate(in) + H(+)(in) = (S)-lactate(out) + H(+)(out). The enzyme catalyses 3-methyl-2-oxobutanoate(out) + H(+)(out) = 3-methyl-2-oxobutanoate(in) + H(+)(in). It carries out the reaction acetoacetate(out) + H(+)(out) = acetoacetate(in) + H(+)(in). The catalysed reaction is (R)-3-hydroxybutanoate(out) + H(+)(out) = (R)-3-hydroxybutanoate(in) + H(+)(in). It catalyses the reaction 4-methyl-2-oxopentanoate(out) + H(+)(out) = 4-methyl-2-oxopentanoate(in) + H(+)(in). The enzyme catalyses pyruvate(out) + H(+)(out) = pyruvate(in) + H(+)(in). It carries out the reaction (S)-3-hydroxybutanoate(out) + H(+)(out) = (S)-3-hydroxybutanoate(in) + H(+)(in). Transport activity exhibits steep dependence on substrate concentration. Substrate concentration sensitivity of SLC16A7 arises from the strong inter-subunit cooperativity of the SLC16A7 dimer during transport. Inhibited by AR-C155858. Functionally, proton-coupled monocarboxylate symporter. Catalyzes the rapid transport across the plasma membrane of monocarboxylates such as L-lactate, pyruvate and ketone bodies, acetoacetate, beta-hydroxybutyrate and acetate. Dimerization is functionally required and both subunits work cooperatively in transporting substrate. This is Monocarboxylate transporter 2 (Slc16a7) from Mus musculus (Mouse).